Consider the following 532-residue polypeptide: Peptide chain release factor 3 (532 aa).

Residues 10–283 form the tr-type G domain; sequence QKRRTFAIIS…GILDWAPSPV (274 aa). Residues 19–26, 87–91, and 141–144 contribute to the GTP site; these read SHPDAGKT, DTPGH, and NKLD.

Belongs to the TRAFAC class translation factor GTPase superfamily. Classic translation factor GTPase family. PrfC subfamily.

It is found in the cytoplasm. In terms of biological role, increases the formation of ribosomal termination complexes and stimulates activities of RF-1 and RF-2. It binds guanine nucleotides and has strong preference for UGA stop codons. It may interact directly with the ribosome. The stimulation of RF-1 and RF-2 is significantly reduced by GTP and GDP, but not by GMP. In Buchnera aphidicola subsp. Baizongia pistaciae (strain Bp), this protein is Peptide chain release factor 3 (prfC).